The primary structure comprises 293 residues: Elongation factor Ts (293 aa).

An involved in Mg(2+) ion dislocation from EF-Tu region spans residues 80-83 (TDFV).

This sequence belongs to the EF-Ts family.

The protein resides in the cytoplasm. Associates with the EF-Tu.GDP complex and induces the exchange of GDP to GTP. It remains bound to the aminoacyl-tRNA.EF-Tu.GTP complex up to the GTP hydrolysis stage on the ribosome. In Janthinobacterium sp. (strain Marseille) (Minibacterium massiliensis), this protein is Elongation factor Ts.